A 299-amino-acid chain; its full sequence is Protoheme IX farnesyltransferase (299 aa).

9 consecutive transmembrane segments (helical) span residues 17 to 37, 41 to 61, 91 to 111, 113 to 133, 141 to 161, 168 to 188, 207 to 227, 228 to 248, and 266 to 286; these read VVALILLTAEVGMFLAVPAPY, GLLVLSASIGISMAAASAAVF, ALMWGVFLGLVGLGILQLFVN, ITMVLTFVSLIGYAIIYTLYL, IVIGGAAGAAPPVLGWTAVSG, ACLLFLIVFIWTPPHFWALAI, GLAYTRTQILLYTVLLLLVSL, LPYLASMSGLIYLVVAIALGI, and IAWCTFVYSINYLMLLFVTLL.

Belongs to the UbiA prenyltransferase family. Protoheme IX farnesyltransferase subfamily.

It is found in the cell inner membrane. The catalysed reaction is heme b + (2E,6E)-farnesyl diphosphate + H2O = Fe(II)-heme o + diphosphate. The protein operates within porphyrin-containing compound metabolism; heme O biosynthesis; heme O from protoheme: step 1/1. Its function is as follows. Converts heme B (protoheme IX) to heme O by substitution of the vinyl group on carbon 2 of heme B porphyrin ring with a hydroxyethyl farnesyl side group. In Ruthia magnifica subsp. Calyptogena magnifica, this protein is Protoheme IX farnesyltransferase.